The primary structure comprises 114 residues: uncharacterized protein (114 aa).

Residues 6–114 enclose the HIT domain; that stretch reads IFGKIIRREI…GGRSLAWPPG (109 aa). A Histidine triad motif motif is present at residues 98 to 102; sequence HLHIH.

This is an uncharacterized protein from Synechococcus elongatus (strain ATCC 33912 / PCC 7942 / FACHB-805) (Anacystis nidulans R2).